A 605-amino-acid polypeptide reads, in one-letter code: Dolichyl-diphosphooligosaccharide--protein glycosyltransferase subunit 1 (605 aa).

The signal sequence occupies residues 1–22; that stretch reads MEAPIVLLLLLWLALAPTPGSA. The Lumenal portion of the chain corresponds to 23-437; the sequence is SSEAPPLVNE…FNKVLMLQEP (415 aa). Position 185 is an N6-acetyllysine (Lys-185). Asn-297 is a glycosylation site (N-linked (GlcNAc...) asparagine). The chain crosses the membrane as a helical span at residues 438-455; that stretch reads LLVVAAFYILFFTVIIYV. Over 456-605 the chain is Cytoplasmic; it reads RLDFSITKDP…TKIDHILDAL (150 aa). Lys-536 bears the N6-acetyllysine; alternate mark. A Glycyl lysine isopeptide (Lys-Gly) (interchain with G-Cter in SUMO2); alternate cross-link involves residue Lys-536.

The protein belongs to the OST1 family. In terms of assembly, component of the oligosaccharyltransferase (OST) complex. OST exists in two different complex forms which contain common core subunits RPN1, RPN2, OST48, OST4, DAD1 and TMEM258, either STT3A or STT3B as catalytic subunits, and form-specific accessory subunits. STT3A complex assembly occurs through the formation of 3 subcomplexes. Subcomplex 1 contains RPN1 and TMEM258, subcomplex 2 contains the STT3A-specific subunits STT3A, DC2/OSTC, and KCP2 as well as the core subunit OST4, and subcomplex 3 contains RPN2, DAD1, and OST48. The STT3A complex can form stable complexes with the Sec61 complex or with both the Sec61 and TRAP complexes. Interacts with TMEM35A/NACHO. Post-translationally, ubiquitinated by the ECS(ASB11) complex. In terms of processing, ufmylated by UFL1 in response to endoplasmic reticulum stress, promoting reticulophagy of endoplasmic reticulum sheets. Expressed in all tissues tested.

The protein resides in the endoplasmic reticulum membrane. The protein operates within protein modification; protein glycosylation. Subunit of the oligosaccharyl transferase (OST) complex that catalyzes the initial transfer of a defined glycan (Glc(3)Man(9)GlcNAc(2) in eukaryotes) from the lipid carrier dolichol-pyrophosphate to an asparagine residue within an Asn-X-Ser/Thr consensus motif in nascent polypeptide chains, the first step in protein N-glycosylation. N-glycosylation occurs cotranslationally and the complex associates with the Sec61 complex at the channel-forming translocon complex that mediates protein translocation across the endoplasmic reticulum (ER). All subunits are required for a maximal enzyme activity. The sequence is that of Dolichyl-diphosphooligosaccharide--protein glycosyltransferase subunit 1 from Rattus norvegicus (Rat).